The following is an 873-amino-acid chain: Bifunctional heparan sulfate N-deacetylase/N-sulfotransferase 3 (873 aa).

Topologically, residues 1–13 (MSFIMKLHRHFQR) are cytoplasmic. A helical; Signal-anchor for type II membrane protein membrane pass occupies residues 14-34 (TVILLATFCMVSIIISAYYLY). The Lumenal segment spans residues 35-873 (SGYKQENELS…WLRQELQKVR (839 aa)). Residues 36-589 (GYKQENELSE…KRHRDIWSKE (554 aa)) are heparan sulfate N-deacetylase 3. N-linked (GlcNAc...) asparagine glycosylation is found at asparagine 146, asparagine 226, asparagine 342, and asparagine 392. Residues 590-873 (KTCDRLPKFL…WLRQELQKVR (284 aa)) form a heparan sulfate N-sulfotransferase 3 region. Lysine 605 acts as the For sulfotransferase activity in catalysis. 3'-phosphoadenylyl sulfate is bound at residue 605-609 (KTGTT). The N-linked (GlcNAc...) asparagine glycan is linked to asparagine 658. Serine 703 is a binding site for 3'-phosphoadenylyl sulfate. N-linked (GlcNAc...) asparagine glycosylation occurs at asparagine 794. An intrachain disulfide couples cysteine 809 to cysteine 819. 824–828 (KGRKY) contacts 3'-phosphoadenylyl sulfate.

The protein belongs to the sulfotransferase 1 family. NDST subfamily. As to quaternary structure, monomer. As to expression, expressed in brain, kidney, liver, fetal and adult lung, adult pancreas, placenta, fetal spleen and fetal thymus. Not detected in adult/ fetal heart and skeletal muscle.

The protein resides in the golgi apparatus membrane. It carries out the reaction alpha-D-glucosaminyl-[heparan sulfate](n) + 3'-phosphoadenylyl sulfate = N-sulfo-alpha-D-glucosaminyl-[heparan sulfate](n) + adenosine 3',5'-bisphosphate + 2 H(+). It functions in the pathway glycan metabolism; heparan sulfate biosynthesis. The protein operates within glycan metabolism; heparin biosynthesis. Its function is as follows. Essential bifunctional enzyme that catalyzes both the N-deacetylation and the N-sulfation of glucosamine (GlcNAc) of the glycosaminoglycan in heparan sulfate. Modifies the GlcNAc-GlcA disaccharide repeating sugar backbone to make N-sulfated heparosan, a prerequisite substrate for later modifications in heparin biosynthesis. Has high deacetylase activity but low sulfotransferase activity. This is Bifunctional heparan sulfate N-deacetylase/N-sulfotransferase 3 from Homo sapiens (Human).